Reading from the N-terminus, the 173-residue chain is Glycine cleavage system H protein, mitochondrial (173 aa).

The N-terminal 48 residues, 1–48 (MALRVVRSVRALLCTLRAVPSPAAPCPPRPWQLGVGAVRTLRTGPALL), are a transit peptide targeting the mitochondrion. Positions 66–148 (IGTVGISNFA…YEDGWLIKMT (83 aa)) constitute a Lipoyl-binding domain. K107 is modified (N6-lipoyllysine).

Belongs to the GcvH family. As to quaternary structure, interacts with GLDC. The glycine cleavage system is composed of four proteins: P (GLDC), T (GCST), L (DLD) and H (GCSH). Requires (R)-lipoate as cofactor.

It localises to the mitochondrion. The glycine cleavage system catalyzes the degradation of glycine. The H protein (GCSH) shuttles the methylamine group of glycine from the P protein (GLDC) to the T protein (GCST). Has a pivotal role in the lipoylation of enzymes involved in cellular energetics such as the mitochondrial dihydrolipoyllysine-residue acetyltransferase component of pyruvate dehydrogenase complex (DLAT), and the mitochondrial dihydrolipoyllysine-residue succinyltransferase component of 2-oxoglutarate dehydrogenase complex (DLST). This is Glycine cleavage system H protein, mitochondrial from Homo sapiens (Human).